The following is a 368-amino-acid chain: NAD(P)H-quinone oxidoreductase subunit 1, chloroplastic (368 aa).

A run of 9 helical transmembrane segments spans residues 27-47, 97-117, 130-150, 166-186, 204-224, 249-269, 270-290, 305-325, and 348-368; these read FLWIIFSILILMLGVTIGVLV, WLFNIGPILVLIPVFLSYLVI, IGVFFWIAVSSVVPLGLLMAG, AAQSISYEIPLALSVLSIALL, FLSWNLWRQPIGFIVFFIASL, YSGMKFAFFYLASYLNLLVSS, LFVTILYLGGWHFSIPFFSLF, VISIIIGIVITLVKSYLFLFI, and FLLPIALGNLLLTTSFQLFLL.

The protein belongs to the complex I subunit 1 family. In terms of assembly, NDH is composed of at least 16 different subunits, 5 of which are encoded in the nucleus.

It is found in the plastid. It localises to the chloroplast thylakoid membrane. It carries out the reaction a plastoquinone + NADH + (n+1) H(+)(in) = a plastoquinol + NAD(+) + n H(+)(out). It catalyses the reaction a plastoquinone + NADPH + (n+1) H(+)(in) = a plastoquinol + NADP(+) + n H(+)(out). Its function is as follows. NDH shuttles electrons from NAD(P)H:plastoquinone, via FMN and iron-sulfur (Fe-S) centers, to quinones in the photosynthetic chain and possibly in a chloroplast respiratory chain. The immediate electron acceptor for the enzyme in this species is believed to be plastoquinone. Couples the redox reaction to proton translocation, and thus conserves the redox energy in a proton gradient. The chain is NAD(P)H-quinone oxidoreductase subunit 1, chloroplastic from Marchantia polymorpha (Common liverwort).